The following is a 174-amino-acid chain: Rubredoxin-2 (174 aa).

In terms of domain architecture, Rubredoxin-like 1 spans 1–53 (MAKYQCPDCEYIYDEVAGHPHEGFPPGTSWETIPEEWACPDCAVRDKADFVVI). Cys6, Cys9, Cys39, and Cys42 together coordinate Fe cation. The span at 56-65 (GSASPASGAA) shows a compositional bias: low complexity. Positions 56–115 (GSASPASGAATPEVRTATTPPKAEASPQKSTGASTPSANNKAKAKAKAKPARAKSSKDST) are disordered. The span at 97 to 109 (AKAKAKAKPARAK) shows a compositional bias: basic residues. The Rubredoxin-like 2 domain maps to 121–172 (FRKWICITCGHIYDEALGDETEGFAPGTLFEDIPDDWCCPDCGATKEDYVLH). Fe cation is bound by residues Cys126, Cys129, Cys159, and Cys162.

This sequence belongs to the rubredoxin family. Requires Fe(3+) as cofactor.

It localises to the cytoplasm. Its pathway is hydrocarbon metabolism; alkane degradation. Functionally, involved in the hydrocarbon hydroxylating system, which transfers electrons from NADH to rubredoxin reductase and then through rubredoxin to alkane 1 monooxygenase. This Alcanivorax borkumensis (strain ATCC 700651 / DSM 11573 / NCIMB 13689 / SK2) protein is Rubredoxin-2 (alkG).